The chain runs to 292 residues: Feruloyl esterase B (292 aa).

An N-terminal signal peptide occupies residues 1–18 (MLPRTLLGLALTAATGLC). 4 N-linked (GlcNAc...) asparagine glycosylation sites follow: Asn-88, Asn-117, Asn-179, and Asn-245.

It belongs to the carbohydrate esterase 1 (CE1) family. Feruloyl esterase type B subfamily.

Its subcellular location is the secreted. The enzyme catalyses feruloyl-polysaccharide + H2O = ferulate + polysaccharide.. In terms of biological role, involved in degradation of plant cell walls. Hydrolyzes of the feruloyl-arabinose ester bond in arabinoxylans as well as the feruloyl-galactose and feruloyl-arabinose ester bonds in pectin. The protein is Feruloyl esterase B (fae-1) of Neurospora crassa (strain ATCC 24698 / 74-OR23-1A / CBS 708.71 / DSM 1257 / FGSC 987).